The following is a 242-amino-acid chain: ATP-dependent dethiobiotin synthetase BioD (242 aa).

An ATP-binding site is contributed by 12-17 (EVGKTV). Position 16 (threonine 16) interacts with Mg(2+). Lysine 37 is a catalytic residue. Serine 41 lines the substrate pocket. ATP is bound by residues aspartate 51 and 112–115 (EGAG). 2 residues coordinate Mg(2+): aspartate 51 and glutamate 112.

It belongs to the dethiobiotin synthetase family. Homodimer. Requires Mg(2+) as cofactor.

The protein resides in the cytoplasm. It catalyses the reaction (7R,8S)-7,8-diammoniononanoate + CO2 + ATP = (4R,5S)-dethiobiotin + ADP + phosphate + 3 H(+). It participates in cofactor biosynthesis; biotin biosynthesis; biotin from 7,8-diaminononanoate: step 1/2. Functionally, catalyzes a mechanistically unusual reaction, the ATP-dependent insertion of CO2 between the N7 and N8 nitrogen atoms of 7,8-diaminopelargonic acid (DAPA, also called 7,8-diammoniononanoate) to form a ureido ring. The chain is ATP-dependent dethiobiotin synthetase BioD from Bacillus thuringiensis (strain Al Hakam).